The primary structure comprises 181 residues: Translation initiation factor IF-3 (181 aa).

This sequence belongs to the IF-3 family. Monomer.

It localises to the cytoplasm. In terms of biological role, IF-3 binds to the 30S ribosomal subunit and shifts the equilibrium between 70S ribosomes and their 50S and 30S subunits in favor of the free subunits, thus enhancing the availability of 30S subunits on which protein synthesis initiation begins. The sequence is that of Translation initiation factor IF-3 from Idiomarina loihiensis (strain ATCC BAA-735 / DSM 15497 / L2-TR).